A 509-amino-acid polypeptide reads, in one-letter code: Meiotically up-regulated gene 157 protein (509 aa).

5 helical membrane passes run 4-24 (WQAILFFLFGIAFANNLNIPW), 140-160 (LATLILGAIQTQAEMLIQFPY), 296-316 (ACVLQYFIPANAMMVVELSHL), 368-388 (ILFMDDANVPSLLSLPYLGFV), and 417-437 (ISGIGGPHIGLRNVWPMSLIV).

It localises to the endoplasmic reticulum membrane. Its function is as follows. Has a role in meiosis. In Schizosaccharomyces pombe (strain 972 / ATCC 24843) (Fission yeast), this protein is Meiotically up-regulated gene 157 protein (mug157).